The sequence spans 336 residues: Probable G-protein coupled receptor 160 (336 aa).

Topologically, residues Met1–Gln20 are extracellular. N-linked (GlcNAc...) asparagine glycosylation is present at Asn8. Residues Leu21–Leu41 traverse the membrane as a helical segment. The Cytoplasmic portion of the chain corresponds to Leu42–Glu56. Residues Tyr57 to Thr77 form a helical membrane-spanning segment. Residues Tyr78 to Cys95 are Extracellular-facing. The helical transmembrane segment at Leu96–Ala116 threads the bilayer. At Cys117–Lys136 the chain is on the cytoplasmic side. Residues Leu137 to Asp157 form a helical membrane-spanning segment. At Pro158–Ser186 the chain is on the extracellular side. The helical transmembrane segment at Leu187–Leu207 threads the bilayer. The Cytoplasmic portion of the chain corresponds to Leu208 to Arg243. Residues Leu244–Ser264 traverse the membrane as a helical segment. Over Leu265–Tyr272 the chain is Extracellular. The helical transmembrane segment at Ile273 to Trp293 threads the bilayer. Over Phe294–Cys336 the chain is Cytoplasmic.

Belongs to the G-protein coupled receptor 1 family.

It is found in the cell membrane. Functionally, orphan receptor. This is Probable G-protein coupled receptor 160 (Gpr160) from Mus musculus (Mouse).